We begin with the raw amino-acid sequence, 344 residues long: Heat-inducible transcription repressor HrcA (344 aa).

Belongs to the HrcA family.

In terms of biological role, negative regulator of class I heat shock genes (grpE-dnaK-dnaJ and groELS operons). Prevents heat-shock induction of these operons. This chain is Heat-inducible transcription repressor HrcA, found in Streptococcus pneumoniae (strain Taiwan19F-14).